Reading from the N-terminus, the 254-residue chain is Persulfide dioxygenase ETHE1, mitochondrial (254 aa).

The N-terminal 7 residues, 1 to 7, are a transit peptide targeting the mitochondrion; the sequence is MAGSVLK. Serine 14 and serine 19 each carry phosphoserine. An N6-acetyllysine; alternate modification is found at lysine 32. Lysine 32 is modified (N6-succinyllysine; alternate). Lysine 66 is modified (N6-acetyllysine). Histidine 79, histidine 135, and aspartate 154 together coordinate Fe cation.

It belongs to the metallo-beta-lactamase superfamily. Glyoxalase II family. Homodimer. Monomer. Interacts with TST. May interact with RELA. The cofactor is Fe(2+).

It is found in the cytoplasm. Its subcellular location is the nucleus. The protein resides in the mitochondrion matrix. It catalyses the reaction S-sulfanylglutathione + O2 + H2O = sulfite + glutathione + 2 H(+). With respect to regulation, glutathione increases enzyme activity. In terms of biological role, sulfur dioxygenase that plays an essential role in hydrogen sulfide catabolism in the mitochondrial matrix. Hydrogen sulfide (H(2)S) is first oxidized by SQRDL, giving rise to cysteine persulfide residues. ETHE1 consumes molecular oxygen to catalyze the oxidation of the persulfide, once it has been transferred to a thiophilic acceptor, such as glutathione (R-SSH). Plays an important role in metabolic homeostasis in mitochondria by metabolizing hydrogen sulfide and preventing the accumulation of supraphysiological H(2)S levels that have toxic effects, due to the inhibition of cytochrome c oxidase. First described as a protein that can shuttle between the nucleus and the cytoplasm and suppress p53-induced apoptosis by sequestering the transcription factor RELA/NFKB3 in the cytoplasm and preventing its accumulation in the nucleus. The protein is Persulfide dioxygenase ETHE1, mitochondrial (ETHE1) of Bos taurus (Bovine).